Reading from the N-terminus, the 669-residue chain is DNA mismatch repair protein MutL (669 aa).

2 disordered regions span residues 354–402 (NRPA…ENPY) and 448–479 (TVSHDSPPNRTAPDATTSSSKPRAPIESPLES). Polar residues predominate over residues 448–468 (TVSHDSPPNRTAPDATTSSSK).

It belongs to the DNA mismatch repair MutL/HexB family.

This protein is involved in the repair of mismatches in DNA. It is required for dam-dependent methyl-directed DNA mismatch repair. May act as a 'molecular matchmaker', a protein that promotes the formation of a stable complex between two or more DNA-binding proteins in an ATP-dependent manner without itself being part of a final effector complex. This Pectobacterium carotovorum subsp. carotovorum (strain PC1) protein is DNA mismatch repair protein MutL.